Consider the following 227-residue polypeptide: Ribonuclease 3 (227 aa).

Positions 6 to 128 constitute an RNase III domain; it reads ASDYQQRIGY…VIAAIYLDAD (123 aa). Glu-41 provides a ligand contact to Mg(2+). Asp-45 is a catalytic residue. Mg(2+) contacts are provided by Asp-114 and Glu-117. Glu-117 is a catalytic residue. Residues 155–225 form the DRBM domain; that stretch reads DPKTRLQEWL…ASHAIDQLDS (71 aa). A compositionally biased stretch (basic and acidic residues) spans 203 to 212; the sequence is GEGSSRRLAE. Residues 203–227 are disordered; it reads GEGSSRRLAEQDAASHAIDQLDSNK.

The protein belongs to the ribonuclease III family. In terms of assembly, homodimer. Requires Mg(2+) as cofactor.

The protein localises to the cytoplasm. It catalyses the reaction Endonucleolytic cleavage to 5'-phosphomonoester.. Its function is as follows. Digests double-stranded RNA. Involved in the processing of primary rRNA transcript to yield the immediate precursors to the large and small rRNAs (23S and 16S). Processes some mRNAs, and tRNAs when they are encoded in the rRNA operon. Processes pre-crRNA and tracrRNA of type II CRISPR loci if present in the organism. The polypeptide is Ribonuclease 3 (Xylella fastidiosa (strain 9a5c)).